A 461-amino-acid chain; its full sequence is Ig heavy chain C region, membrane-bound form (461 aa).

The segment at 1–99 (ATPSPPTLYG…GESVWIKEIP (99 aa)) is CH1. Positions 100 to 205 (DCKGDKVHPT…TQSRNITGSQ (106 aa)) are CH2. Residues asparagine 164, asparagine 200, asparagine 245, asparagine 275, asparagine 374, asparagine 411, asparagine 415, and asparagine 437 are each glycosylated (N-linked (GlcNAc...) asparagine). The CH3 stretch occupies residues 206-308 (VPCSCNDPVI…PLRASIHKEE (103 aa)). Residues 309-418 (VKDLREPSVS…IINRTVNKSS (110 aa)) are CH4. The helical transmembrane segment at 438–458 (ASTFIILFFLSIFYRAAVTLV) threads the bilayer.

The protein resides in the cell membrane. The polypeptide is Ig heavy chain C region, membrane-bound form (Heterodontus francisci (Horn shark)).